Consider the following 277-residue polypeptide: Protein G1-like2 (277 aa).

A compositionally biased stretch (gly residues) spans 1-16; the sequence is MQGGGGGDSSGGGGGE. Disordered stretches follow at residues 1-28, 141-203, and 225-245; these read MQGG…SQKR, RGIA…GHFF, and HQVS…TNTG. Positions 19–28 are enriched in basic and acidic residues; sequence RPSRYESQKR. The ALOG domain maps to 22 to 149; the sequence is RYESQKRRDW…ARGIAYEKKR (128 aa). A Nuclear localization signal motif is present at residues 147-151; it reads KKRRK. Low complexity predominate over residues 154 to 177; the sequence is PTSSSSSQAAAAAAAATSPASPAA. Pro residues predominate over residues 178–187; that stretch reads SPTPPPPPPT.

Belongs to the plant homeotic and developmental regulators ALOG protein family.

It localises to the nucleus. Functionally, probable transcription regulator that acts as a developmental regulator by promoting cell growth in response to light. This is Protein G1-like2 (G1L2) from Oryza sativa subsp. japonica (Rice).